Here is a 231-residue protein sequence, read N- to C-terminus: Response regulator MprA (231 aa).

The 115-residue stretch at 4–118 (RILVVDDDRA…ELLARMRALL (115 aa)) folds into the Response regulatory domain. The residue at position 48 (aspartate 48) is a 4-aspartylphosphate. A DNA-binding region (ompR/PhoB-type) is located at residues 130-228 (SAAMTFSDLS…VRGVGYVLRE (99 aa)).

In terms of processing, phosphorylated and dephosphorylated by MprB.

Its subcellular location is the cytoplasm. Functionally, member of the two-component regulatory system MprB/MprA which contributes to maintaining a balance among several systems involved in stress resistance and is required for establishment and maintenance of persistent infection in the host. Functions as a transcriptional regulator that recognizes a 19-bp nucleotide motif comprizing two loosely conserved 8-bp direct DNA-binding motif repeats separated by a 3-bp spacer region. The chain is Response regulator MprA (mprA) from Mycolicibacterium vanbaalenii (strain DSM 7251 / JCM 13017 / BCRC 16820 / KCTC 9966 / NRRL B-24157 / PYR-1) (Mycobacterium vanbaalenii).